Here is a 161-residue protein sequence, read N- to C-terminus: Pupal cuticle protein C1B (161 aa).

9 consecutive repeat copies span residues 6–9, 14–17, 35–38, 87–90, 103–106, 112–115, 121–124, 130–133, and 143–146.

Its function is as follows. Component of the cuticle of the pupa of Tenebrio molitor. The polypeptide is Pupal cuticle protein C1B (Tenebrio molitor (Yellow mealworm beetle)).